The sequence spans 1555 residues: MSEQTPAEAGAAGAREDACRDYQSSLEDLTFNSKPHINMLTILAEENLPFAKEIVSLIEAQTAKAPSSEKLPVMYLMDSIVKNVGREYLTAFTKNLVATFICVFEKVDENTRKSLFKLRSTWDEIFPLKKLYALDVRVNSLDPAWPIKPLPPNVNTSSIHVNPKFLNKSPEEPSTPGTVVSSPSISTPPIVPDIQKNLTQEQLIRQQLLAKQKQLLELQQKKLELELEQAKAQLAVSLSVQQETSNLGPGSAPSKLHVSQIPPMAVKAPHQVPVQSEKSRPGPSLQIQDLKGTNRDPRLNRISQHSHGKDQSHRKEFLMNTLNQSDTKTSKTIPSEKLNSSKQEKSKSGEKITKKELDQLDSKSKSKSKSPSPLKNKLSHTKDLKNQESESMRLSDMNKRDPRLKKHLQDKTDGKDDDVKEKRKTAEKKDKDEHMKSSEHRLAGSRNKIINGIVQKQDTITEESEKQGTKPGRSSTRKRSRSRSPKSRSPIIHSPKRRDRRSPKRRQRSMSPTSTPKAGKIRQSGAKQSHMEEFTPPSREDRNAKRSTKQDIRDPRRMKKTEEERPQETTNQHSTKSGTEPKENVENWQSSKSAKRWKSGWEENKSLQQVDEHSKPPHLRHRESWSSTKGILSPRAPKQQQHRLSVDANLQIPKELTLASKRELLQKTSERLASGEITQDDFLVVVHQIRQLFQYQEGVREEQRSPFNDRFPLKRPRYEDSDKPFVDSPASRFAGLDTNQRLTALAEDRPLFDGPSRPSVARDGPTKMIFEGPNKLSPRIDGPPTPASLRFDGSPGQMGGGGPLRFEGPQGQLGGGCPLRFEGPPGPVGTPLRFEGPIGQAGGGGFRFEGSPGLRFEGSPGGLRFEGPGGQPVGGLRFEGHRGQPVGGLRFEGPHGQPVGGLRFDNPRGQPVGGLRFEGGHGPSGAAIRFDGPHGQPGGGIRFEGPLLQQGVGMRFEGPHGQSVAGLRFEGQHNQLGGNLRFEGPHGQPGVGIRFEGPLVQQGGGMRFEGPSVPGGGLRIEGPLGQGGPRFEGCHALRFDGQPGQPSLLPRFDGLHGQPGPRFERTPGQPGPQRFDGPPGQQVQPRFDGVPQRFDGPQHQQASRFDIPLGLQGTRFDNHPSQRLESVSFNQTGPYNDPPGNAFNAPSQGLQFQRHEQIFDSPQGPNFNGPHGPGNQSFSNPLNRASGHYFDEKNLQSSQFGNFGNIPAPMTVGNIQASQQVLSGVAQPVAFGQGQQFLPVHPQNPGFVQNPSGALPKAYPDNHLSQVDVNELFSKLLKTGILKLSQTDSATTQVSEVTAQPPPEEEEDQNEDQDVPDLTNFTVEELKQRYDSVINRLYTGIQCYSCGMRFTTSQTDVYADHLDWHYRQNRTEKDVSRKVTHRRWYYSLTDWIEFEEIADLEERAKSQFFEKVHEEVVLKTQEAAKEKEFQSVPAGPAGAVESCEICQEQFEQYWDEEEEEWHLKNAIRVDGKIYHPSCYEDYQNTSSFDCTPSPSKTPVENPLNIMLNIVKNELQEPCDSPKVKEERIDTPPACTEESIATPSEIKTENDTVESV.

Residue Ser2 is modified to N-acetylserine. Residues 14–142 enclose the CID domain; sequence AREDACRDYQ…ALDVRVNSLD (129 aa). A Phosphoserine; by WNK1 modification is found at Ser120. Residue Thr121 is modified to Phosphothreonine; by WNK1. Positions 167–186 are disordered; that stretch reads NKSPEEPSTPGTVVSSPSIS. A phosphoserine mark is found at Ser169 and Ser182. Positions 174-186 are enriched in low complexity; the sequence is STPGTVVSSPSIS. A coiled-coil region spans residues 202 to 239; it reads QLIRQQLLAKQKQLLELQQKKLELELEQAKAQLAVSLS. A disordered region spans residues 266–648; it reads VKAPHQVPVQ…QQQHRLSVDA (383 aa). A Glycyl lysine isopeptide (Lys-Gly) (interchain with G-Cter in SUMO2) cross-link involves residue Lys291. The segment covering 307 to 317 has biased composition (basic and acidic residues); the sequence is HGKDQSHRKEF. Positions 320–333 are enriched in polar residues; the sequence is NTLNQSDTKTSKTI. Residue Lys328 forms a Glycyl lysine isopeptide (Lys-Gly) (interchain with G-Cter in SUMO2) linkage. Composition is skewed to basic and acidic residues over residues 342 to 364, 380 to 421, and 427 to 442; these read KQEKSKSGEKITKKELDQLDSKS, HTKD…DVKE, and EKKDKDEHMKSSEHRL. A Glycyl lysine isopeptide (Lys-Gly) (interchain with G-Cter in SUMO2) cross-link involves residue Lys456. The residue at position 459 (Thr459) is a Phosphothreonine. The span at 475-486 shows a compositional bias: basic residues; it reads STRKRSRSRSPK. 4 positions are modified to phosphoserine: Ser489, Ser494, Ser509, and Ser511. Residues 494 to 508 show a composition bias toward basic residues; that stretch reads SPKRRDRRSPKRRQR. The segment covering 529–567 has biased composition (basic and acidic residues); it reads SHMEEFTPPSREDRNAKRSTKQDIRDPRRMKKTEEERPQ. Positions 568-578 are enriched in polar residues; it reads ETTNQHSTKSG. Residues 599–615 are compositionally biased toward basic and acidic residues; the sequence is SGWEENKSLQQVDEHSK. Ser645 bears the Phosphoserine mark. A Glycyl lysine isopeptide (Lys-Gly) (interchain with G-Cter in SUMO2) cross-link involves residue Lys654. Residue Ser705 is modified to Phosphoserine. Disordered stretches follow at residues 707–732 and 749–781; these read FNDRFPLKRPRYEDSDKPFVDSPASR and RPLFDGPSRPSVARDGPTKMIFEGPNKLSPRID. Basic and acidic residues predominate over residues 716 to 725; it reads PRYEDSDKPF. A Glycyl lysine isopeptide (Lys-Gly) (interchain with G-Cter in SUMO2) cross-link involves residue Lys723. Residues Ser728 and Ser777 each carry the phosphoserine modification. A Phosphothreonine modification is found at Thr785. The residue at position 794 (Ser794) is a Phosphoserine. Asymmetric dimethylarginine occurs at positions 805, 820, and 833. Residue Ser851 is modified to Phosphoserine. 6 positions are modified to asymmetric dimethylarginine: Arg929, Arg942, Arg955, Arg981, Arg994, and Arg1007. The interval 1056 to 1081 is disordered; the sequence is HGQPGPRFERTPGQPGPQRFDGPPGQ. Residues Arg1093 and Arg1104 each carry the asymmetric dimethylarginine modification. 2 disordered regions span residues 1127–1147 and 1159–1187; these read VSFNQTGPYNDPPGNAFNAPS and FDSPQGPNFNGPHGPGNQSFSNPLNRASG. The residue at position 1161 (Ser1161) is a Phosphoserine. A compositionally biased stretch (low complexity) spans 1162–1175; that stretch reads PQGPNFNGPHGPGN. A Glycyl lysine isopeptide (Lys-Gly) (interchain with G-Cter in SUMO2) cross-link involves residue Lys1278. Over residues 1289-1298 the composition is skewed to polar residues; that stretch reads SATTQVSEVT. The segment at 1289-1315 is disordered; the sequence is SATTQVSEVTAQPPPEEEEDQNEDQDV. Acidic residues predominate over residues 1303–1315; the sequence is PEEEEDQNEDQDV. Glycyl lysine isopeptide (Lys-Gly) (interchain with G-Cter in SUMO2) cross-links involve residues Lys1419, Lys1511, and Lys1524. The interval 1516 to 1555 is disordered; the sequence is EPCDSPKVKEERIDTPPACTEESIATPSEIKTENDTVESV. Basic and acidic residues predominate over residues 1519–1529; it reads DSPKVKEERID. Phosphothreonine is present on Thr1530. Residue Lys1546 forms a Glycyl lysine isopeptide (Lys-Gly) (interchain with G-Cter in SUMO2) linkage.

As to quaternary structure, associates with the phosphorylated CTD domain of POLR2A /RNA polymerase II. Phosphorylation at Ser-120 and/or Thr-121 by WNK1 weakens its association with POLR2A/RNA polymerase II, promoting transcript release from the chromatin template and mRNA export to the cytoplasm.

The protein resides in the nucleus. Functionally, component of pre-mRNA cleavage complex II, which promotes transcription termination by RNA polymerase II. This is Pre-mRNA cleavage complex 2 protein Pcf11 from Homo sapiens (Human).